A 1072-amino-acid polypeptide reads, in one-letter code: Netrin receptor unc-5 (1072 aa).

A signal peptide spans 1 to 30 (MAVINKAGNVIALLLVKLQLILLFTLSVSG). Residues 31–440 (ELPQLDYGSL…SSEAEEAGDL (410 aa)) lie on the Extracellular side of the membrane. The segment at 77 to 100 (LGNSSEDENVRPQQGSSSSGLGSS) is disordered. The N-linked (GlcNAc...) asparagine glycan is linked to asparagine 79. Residues 128–224 (PIFLIEPESV…RGVVKSQAAT (97 aa)) enclose the Ig-like domain. 5 disulfide bridges follow: cysteine 149/cysteine 207, cysteine 253/cysteine 303, cysteine 336/cysteine 375, cysteine 338/cysteine 378, and cysteine 352/cysteine 364. Residues 232–314 (KSFNQSPTSL…AENIAGRRVS (83 aa)) enclose the Ig-like C2-type domain. N-linked (GlcNAc...) asparagine glycosylation is present at asparagine 300. TSP type-1 domains lie at 324–379 (NGGW…AACP) and 398–499 (MARW…EQCQ). Residues 441 to 461 (LLGAPGVGMAALIAAAGVGAV) traverse the membrane as a helical segment. The Cytoplasmic portion of the chain corresponds to 462 to 1072 (GSPSEATGSS…IVETIGPLWI (611 aa)). The ZU5 domain maps to 654–802 (SSTYEMLGSA…LGHFTVVAEP (149 aa)). A Death domain is found at 980–1067 (LICGALDPPR…DVLDIIVETI (88 aa)).

The protein belongs to the unc-5 family. Post-translationally, phosphorylated on different cytoplasmic tyrosine residues. In terms of tissue distribution, prior to gastrulation, it is strongly expressed in the presumptive mesoderm. Mesodermal expression begins to fade during stages 13-14, persisting only in the cells that form the dorsal vessel. Expressed within the CNS from late stage 13, shortly after the first axons have extended. Detected in several dispersed clusters of cells within the CNS, increasing in number as development proceeds. Also expressed in the peripheral and exit glia, which migrate laterally out of the CNS between stages 14 and 17. Strongly expressed in motor axons that exit the CNS ipsilaterally via the segmental nerve root (SN). Not expressed on either commissural or longitudinal axons within the CNS, nor on motor axons that exit via the intersegmental nerve (ISN). In the periphery, it is detected on all branches of the SN. Also expressed at high level in exit and peripheral glia along both the SN and ISN.

The protein resides in the membrane. In terms of biological role, receptor for netrin required for motor axon guidance. Mediates both short- and long-range axon motor repulsion in the developing nervous system upon ligand binding. Also involved in glial migration. While short-range repulsion requires both fra and unc-5, long-range repulsion only requires unc-5. In Drosophila melanogaster (Fruit fly), this protein is Netrin receptor unc-5 (unc-5).